Reading from the N-terminus, the 294-residue chain is Halotolerance protein HAL1 (294 aa).

Residues 115–153 are disordered; the sequence is LKRGTKEQEDINSSTSKKSAVINNFSGEKTPNPRPQSSN. Positions 125–153 are enriched in polar residues; that stretch reads INSSTSKKSAVINNFSGEKTPNPRPQSSN. Serine 266 bears the Phosphoserine mark.

The protein resides in the cytoplasm. Its function is as follows. Involved in salt tolerance. The polypeptide is Halotolerance protein HAL1 (HAL1) (Saccharomyces cerevisiae (strain ATCC 204508 / S288c) (Baker's yeast)).